The primary structure comprises 486 residues: Cardiolipin synthase A (486 aa).

A run of 2 helical transmembrane segments spans residues 3–23 (TFYT…IAGV) and 38–58 (MAWL…YLSF). 2 PLD phosphodiesterase domains span residues 219–246 (MDLR…VDPR) and 399–426 (KDGL…DMRS). Catalysis depends on residues His-224, Lys-226, Asp-231, His-404, Lys-406, and Asp-411.

It belongs to the phospholipase D family. Cardiolipin synthase subfamily. ClsA sub-subfamily.

The protein resides in the cell inner membrane. It carries out the reaction 2 a 1,2-diacyl-sn-glycero-3-phospho-(1'-sn-glycerol) = a cardiolipin + glycerol. Functionally, catalyzes the reversible phosphatidyl group transfer from one phosphatidylglycerol molecule to another to form cardiolipin (CL) (diphosphatidylglycerol) and glycerol. This Pectobacterium atrosepticum (strain SCRI 1043 / ATCC BAA-672) (Erwinia carotovora subsp. atroseptica) protein is Cardiolipin synthase A.